We begin with the raw amino-acid sequence, 1205 residues long: ATP-dependent DNA helicase MER3 homolog (1205 aa).

Residues 41–236 (PACFLSDVNM…WLAVPSEGIK (196 aa)) enclose the Helicase ATP-binding domain. 54 to 61 (APTGSGKT) is a binding site for ATP. The DEAH box signature appears at 172 to 175 (DEVH). A Helicase C-terminal domain is found at 266 to 467 (RLQSFIFDIL…CAVEHLNAEI (202 aa)). Positions 541–852 (PLEPGRLMTK…FEEYVGLDIH (312 aa)) constitute an SEC63 domain. A compositionally biased stretch (polar residues) spans 1075–1091 (QKSEILNRTQGKNSTQL). Residues 1075–1131 (QKSEILNRTQGKNSTQLAGKKAFEKSKTPDENSLHFVGKRDSSSEKSKALSKTPDEN) form a disordered region. Residues 1095 to 1122 (KAFEKSKTPDENSLHFVGKRDSSSEKSK) are compositionally biased toward basic and acidic residues.

This sequence belongs to the helicase family. SKI2 subfamily. As to expression, transcribed preferentially in early stages of meiocyte development and during meiosis in young flowers.

It is found in the nucleus. The protein localises to the chromosome. It catalyses the reaction Couples ATP hydrolysis with the unwinding of duplex DNA by translocating in the 3'-5' direction.. The catalysed reaction is ATP + H2O = ADP + phosphate + H(+). Its function is as follows. DNA helicase required for crossover formation, complete synapsis of homologous chromosomes and bivalent formation during meiosis. Is specific to recombination events resulting in interference-sensitive crossovers (class I meiotic crossover). Works cooperatively with ZIP4 to promote crossovers. In Oryza sativa subsp. japonica (Rice), this protein is ATP-dependent DNA helicase MER3 homolog.